The sequence spans 341 residues: Platelet-activating factor receptor (341 aa).

At Met-1–Thr-16 the chain is on the extracellular side. Asn-4 carries an N-linked (GlcNAc...) asparagine glycan. A helical transmembrane segment spans residues Leu-17–Trp-38. The Cytoplasmic portion of the chain corresponds to Val-39–Ile-54. A helical transmembrane segment spans residues Phe-55–Ile-74. Over Val-75–Asn-91 the chain is Extracellular. The cysteines at positions 90 and 173 are disulfide-linked. The chain crosses the membrane as a helical span at residues Val-92–Tyr-113. The Cytoplasmic segment spans residues Asn-114–Arg-133. The helical transmembrane segment at Gly-134 to Thr-155 threads the bilayer. Topologically, residues Asp-156 to Ile-184 are extracellular. Asn-169 is a glycosylation site (N-linked (GlcNAc...) asparagine). A helical transmembrane segment spans residues Leu-185–Cys-205. The Cytoplasmic segment spans residues Asn-206–Met-233. The chain crosses the membrane as a helical span at residues Val-234–Pro-254. Over Trp-255–Gln-275 the chain is Extracellular. A helical membrane pass occupies residues Ile-276 to Leu-295. Residues Thr-296–Asn-341 are Cytoplasmic-facing.

It belongs to the G-protein coupled receptor 1 family. As to quaternary structure, interacts with ARRB1. As to expression, found in a range of organs. Expressed most strongly in spleen, followed by skeletal muscle, lung and small intestine. Expressed at moderate levels in the heart. Expressed at relatively low levels in the brain, liver and kidney.

It localises to the cell membrane. Its function is as follows. Receptor for platelet activating factor, a chemotactic phospholipid mediator that possesses potent inflammatory, smooth-muscle contractile and hypotensive activity. Seems to mediate its action via a G protein that activates a phosphatidylinositol-calcium second messenger system. This chain is Platelet-activating factor receptor (Ptafr), found in Mus musculus (Mouse).